Here is a 254-residue protein sequence, read N- to C-terminus: Phosphoribosylaminoimidazole-succinocarboxamide synthase 1 (254 aa).

It belongs to the SAICAR synthetase family.

It catalyses the reaction 5-amino-1-(5-phospho-D-ribosyl)imidazole-4-carboxylate + L-aspartate + ATP = (2S)-2-[5-amino-1-(5-phospho-beta-D-ribosyl)imidazole-4-carboxamido]succinate + ADP + phosphate + 2 H(+). It functions in the pathway purine metabolism; IMP biosynthesis via de novo pathway; 5-amino-1-(5-phospho-D-ribosyl)imidazole-4-carboxamide from 5-amino-1-(5-phospho-D-ribosyl)imidazole-4-carboxylate: step 1/2. In Agrobacterium fabrum (strain C58 / ATCC 33970) (Agrobacterium tumefaciens (strain C58)), this protein is Phosphoribosylaminoimidazole-succinocarboxamide synthase 1 (purC1).